Consider the following 205-residue polypeptide: Outer-membrane lipoprotein LolB (205 aa).

An N-terminal signal peptide occupies residues 1–17; sequence MFLRHCITFTLIALLAG. The N-palmitoyl cysteine moiety is linked to residue C18. A lipid anchor (S-diacylglycerol cysteine) is attached at C18.

Belongs to the LolB family. In terms of assembly, monomer.

Its subcellular location is the cell outer membrane. In terms of biological role, plays a critical role in the incorporation of lipoproteins in the outer membrane after they are released by the LolA protein. This chain is Outer-membrane lipoprotein LolB, found in Pseudomonas putida (strain GB-1).